A 376-amino-acid chain; its full sequence is 4-hydroxy-3-methylbut-2-enyl diphosphate reductase (376 aa).

Cysteine 19 is a [4Fe-4S] cluster binding site. Residues histidine 48 and histidine 99 each contribute to the (2E)-4-hydroxy-3-methylbut-2-enyl diphosphate site. Residues histidine 48 and histidine 99 each contribute to the dimethylallyl diphosphate site. 2 residues coordinate isopentenyl diphosphate: histidine 48 and histidine 99. Cysteine 121 is a binding site for [4Fe-4S] cluster. Histidine 149 lines the (2E)-4-hydroxy-3-methylbut-2-enyl diphosphate pocket. Histidine 149 contributes to the dimethylallyl diphosphate binding site. Histidine 149 lines the isopentenyl diphosphate pocket. Residue glutamate 151 is the Proton donor of the active site. Threonine 208 contributes to the (2E)-4-hydroxy-3-methylbut-2-enyl diphosphate binding site. Residue cysteine 236 participates in [4Fe-4S] cluster binding. Residues serine 264, asparagine 266, and serine 307 each coordinate (2E)-4-hydroxy-3-methylbut-2-enyl diphosphate. The dimethylallyl diphosphate site is built by serine 264, asparagine 266, and serine 307. Isopentenyl diphosphate-binding residues include serine 264, asparagine 266, and serine 307.

This sequence belongs to the IspH family. Requires [4Fe-4S] cluster as cofactor.

It carries out the reaction isopentenyl diphosphate + 2 oxidized [2Fe-2S]-[ferredoxin] + H2O = (2E)-4-hydroxy-3-methylbut-2-enyl diphosphate + 2 reduced [2Fe-2S]-[ferredoxin] + 2 H(+). The enzyme catalyses dimethylallyl diphosphate + 2 oxidized [2Fe-2S]-[ferredoxin] + H2O = (2E)-4-hydroxy-3-methylbut-2-enyl diphosphate + 2 reduced [2Fe-2S]-[ferredoxin] + 2 H(+). The protein operates within isoprenoid biosynthesis; dimethylallyl diphosphate biosynthesis; dimethylallyl diphosphate from (2E)-4-hydroxy-3-methylbutenyl diphosphate: step 1/1. It functions in the pathway isoprenoid biosynthesis; isopentenyl diphosphate biosynthesis via DXP pathway; isopentenyl diphosphate from 1-deoxy-D-xylulose 5-phosphate: step 6/6. Functionally, catalyzes the conversion of 1-hydroxy-2-methyl-2-(E)-butenyl 4-diphosphate (HMBPP) into a mixture of isopentenyl diphosphate (IPP) and dimethylallyl diphosphate (DMAPP). Acts in the terminal step of the DOXP/MEP pathway for isoprenoid precursor biosynthesis. The protein is 4-hydroxy-3-methylbut-2-enyl diphosphate reductase of Treponema pallidum (strain Nichols).